The following is a 351-amino-acid chain: N-terminal EF-hand calcium-binding protein 1 (351 aa).

Ser4 carries the phosphoserine modification. EF-hand domains follow at residues 26–61 (KGMS…GVLS) and 60–95 (LSGE…HLGE). Ca(2+) contacts are provided by Asp39, Asn41, Asp43, Lys45, and Glu50. The stretch at 135 to 163 (LLKETLNQLQSLQNSLECAMETTEEQTRQ) forms a coiled coil. The interval 180 to 203 (GKRSSRRVQRHNSFSPNSPQFNVS) is disordered. The span at 190–202 (HNSFSPNSPQFNV) shows a compositional bias: polar residues. A phosphoserine mark is found at Ser192 and Ser197. Residues 209–275 (EEDNQWMTQI…EEFQLALKHY (67 aa)) adopt a coiled-coil conformation. The 89-residue stretch at 252–340 (MLVQRQMSVI…LETPELTSTM (89 aa)) folds into the ABM domain.

In terms of assembly, interacts with STX1. May interact with CPNE6. Expressed in brain (at protein level).

The protein resides in the cytoplasm. This Homo sapiens (Human) protein is N-terminal EF-hand calcium-binding protein 1 (NECAB1).